A 180-amino-acid chain; its full sequence is UPF0227 protein KPN78578_10770 (180 aa).

This sequence belongs to the UPF0227 family.

This is UPF0227 protein KPN78578_10770 from Klebsiella pneumoniae subsp. pneumoniae (strain ATCC 700721 / MGH 78578).